A 519-amino-acid chain; its full sequence is Probable anion transporter 3, chloroplastic (519 aa).

The transit peptide at 1-76 directs the protein to the chloroplast; that stretch reads MAPPGQLLPL…PPPPATSLPG (76 aa). Pro residues predominate over residues 56–72; it reads LPFAPPRRLSRPPPPAT. Positions 56-82 are disordered; the sequence is LPFAPPRRLSRPPPPATSLPGASPGGG. 12 helical membrane-spanning segments follow: residues 100–120, 138–158, 166–186, 188–208, 229–249, 253–273, 326–346, 362–382, 403–423, 424–444, 460–480, and 488–508; these read VAAMLGLALALCNADRVVMSV, VVQSSFLWGYLVSPIIGGALV, VMAYGVALWSLATFLSPWAAA, SLWLFLSTRVLLGMAEGVALP, IAMAGFQLGNTIGLLLSPIIM, GIFGPFVIFGLFGFLWVLVWI, WALISANAMHSWGYFVILSWM, AWFSALPWVMMAVLGYVAGVV, IGFVGPGVALLGLNAAKSPVI, ASAWLTIAVGLKSFGHSGFLV, MSNTAGTFAAILGTVGAGFFV, and GFLILTSLLYFSSTLFWDIFA.

This sequence belongs to the major facilitator superfamily. Sodium/anion cotransporter (TC 2.A.1.14) family.

Its subcellular location is the plastid. The protein localises to the chloroplast membrane. Functionally, probable anion transporter. The polypeptide is Probable anion transporter 3, chloroplastic (PHT4;3) (Oryza sativa subsp. japonica (Rice)).